We begin with the raw amino-acid sequence, 524 residues long: GMP synthase [glutamine-hydrolyzing] (524 aa).

The Glutamine amidotransferase type-1 domain maps to 8 to 206 (RILILDFGSQ…IYDICGCEAL (199 aa)). Cysteine 85 (nucleophile) is an active-site residue. Catalysis depends on residues histidine 180 and glutamate 182. Residues 207 to 399 (WEPRHIIAKS…LGLPFELVYR (193 aa)) form the GMPS ATP-PPase domain. An ATP-binding site is contributed by 234 to 240 (SGGVDSS).

In terms of assembly, homodimer.

The catalysed reaction is XMP + L-glutamine + ATP + H2O = GMP + L-glutamate + AMP + diphosphate + 2 H(+). It participates in purine metabolism; GMP biosynthesis; GMP from XMP (L-Gln route): step 1/1. In terms of biological role, catalyzes the synthesis of GMP from XMP. This chain is GMP synthase [glutamine-hydrolyzing], found in Nitrosococcus oceani (strain ATCC 19707 / BCRC 17464 / JCM 30415 / NCIMB 11848 / C-107).